A 290-amino-acid chain; its full sequence is ATP synthase gamma chain (290 aa).

The protein belongs to the ATPase gamma chain family. F-type ATPases have 2 components, CF(1) - the catalytic core - and CF(0) - the membrane proton channel. CF(1) has five subunits: alpha(3), beta(3), gamma(1), delta(1), epsilon(1). CF(0) has three main subunits: a, b and c.

The protein resides in the cell inner membrane. Its function is as follows. Produces ATP from ADP in the presence of a proton gradient across the membrane. The gamma chain is believed to be important in regulating ATPase activity and the flow of protons through the CF(0) complex. The polypeptide is ATP synthase gamma chain (Amoebophilus asiaticus (strain 5a2)).